Consider the following 471-residue polypeptide: Adenosylhomocysteinase (471 aa).

Substrate contacts are provided by Thr-60, Asp-135, and Glu-196. NAD(+) is bound at residue 197-199 (TTT). Substrate is bound by residues Lys-226 and Asp-230. NAD(+)-binding positions include Asn-231, 260-265 (GYGDVG), Glu-283, Asn-318, 339-341 (IGH), and Asn-387.

It belongs to the adenosylhomocysteinase family. NAD(+) serves as cofactor.

It is found in the cytoplasm. It catalyses the reaction S-adenosyl-L-homocysteine + H2O = L-homocysteine + adenosine. It participates in amino-acid biosynthesis; L-homocysteine biosynthesis; L-homocysteine from S-adenosyl-L-homocysteine: step 1/1. Functionally, may play a key role in the regulation of the intracellular concentration of adenosylhomocysteine. The sequence is that of Adenosylhomocysteinase from Chlorobium limicola (strain DSM 245 / NBRC 103803 / 6330).